A 301-amino-acid polypeptide reads, in one-letter code: MKITCNAGGLTLKNPTILAAGVLGTTGASLKRIASMGAGAVVTKSIGTEPKPGHHNPSMIRLEEGYINAMGLPNPSFGEFRQELEIARESGVPVIASIFGATPEEFTAVANGLPGADAYELNVSCPHAKGYGMQCGTDPELVRSITKAVKAAVKVPVWVKLTPNVTDIRPIGLAAQEGGADAVVAINTLKAMAIDINTGWPILGNRSGGLSGPAVKPVAIKCVYDLYEVLDIPVIGVGGVSNWADAIEFMMAGACAVEIGSAVYEDIGTFASVSMGISNYLDRKNMKLDEIIGLAHRVVKQ.

Residues Lys-44, 68–72 (NAMGL), and Asn-122 contribute to the substrate site. 44-45 (KS) serves as a coordination point for FMN. Asn-122 provides a ligand contact to FMN. The active-site Nucleophile is the Cys-125. FMN contacts are provided by Lys-160 and Ile-186. Substrate is bound at residue 187–188 (NT). FMN is bound by residues Gly-212, 238–239 (GG), and 260–261 (GS).

It belongs to the dihydroorotate dehydrogenase family. Type 1 subfamily. As to quaternary structure, heterotetramer of 2 PyrK and 2 PyrD type B subunits. The cofactor is FMN.

Its subcellular location is the cytoplasm. The enzyme catalyses (S)-dihydroorotate + NAD(+) = orotate + NADH + H(+). It participates in pyrimidine metabolism; UMP biosynthesis via de novo pathway; orotate from (S)-dihydroorotate (NAD(+) route): step 1/1. Functionally, catalyzes the conversion of dihydroorotate to orotate with NAD(+) as electron acceptor. The sequence is that of Dihydroorotate dehydrogenase B (NAD(+)), catalytic subunit (pyrD) from Methanocella arvoryzae (strain DSM 22066 / NBRC 105507 / MRE50).